Reading from the N-terminus, the 574-residue chain is Arginine--tRNA ligase (574 aa).

Residues 121–131 carry the 'HIGH' region motif; sequence PNIAKEMHIGH.

This sequence belongs to the class-I aminoacyl-tRNA synthetase family. As to quaternary structure, monomer.

It localises to the cytoplasm. The enzyme catalyses tRNA(Arg) + L-arginine + ATP = L-arginyl-tRNA(Arg) + AMP + diphosphate. This is Arginine--tRNA ligase from Buchnera aphidicola subsp. Acyrthosiphon pisum (strain Tuc7).